Reading from the N-terminus, the 213-residue chain is Nicolin-1 (213 aa).

Part of the neuronal tubulin polyglutamylase complex which contains TPGS1, TPGS2, TTLL1, LRRC49 and NICN1. In terms of tissue distribution, high expression level is found in brain, testis, liver and kidney. Weak expression in spleen, leukocytes, small intestin and colon.

Its subcellular location is the nucleus. This chain is Nicolin-1 (Nicn1), found in Mus musculus (Mouse).